A 122-amino-acid chain; its full sequence is Large ribosomal subunit protein uL14 (122 aa).

The protein belongs to the universal ribosomal protein uL14 family. As to quaternary structure, part of the 50S ribosomal subunit. Forms a cluster with proteins L3 and L19. In the 70S ribosome, L14 and L19 interact and together make contacts with the 16S rRNA in bridges B5 and B8.

In terms of biological role, binds to 23S rRNA. Forms part of two intersubunit bridges in the 70S ribosome. In Rickettsia africae (strain ESF-5), this protein is Large ribosomal subunit protein uL14.